A 149-amino-acid chain; its full sequence is 3-dehydroquinate dehydratase (149 aa).

Tyr-26 (proton acceptor) is an active-site residue. Residues Asn-78, His-84, and Asp-91 each contribute to the substrate site. The Proton donor role is filled by His-104. Residues 105–106 (LS) and Arg-115 contribute to the substrate site.

The protein belongs to the type-II 3-dehydroquinase family. As to quaternary structure, homododecamer.

The catalysed reaction is 3-dehydroquinate = 3-dehydroshikimate + H2O. It participates in metabolic intermediate biosynthesis; chorismate biosynthesis; chorismate from D-erythrose 4-phosphate and phosphoenolpyruvate: step 3/7. In terms of biological role, catalyzes a trans-dehydration via an enolate intermediate. In Polynucleobacter necessarius subsp. necessarius (strain STIR1), this protein is 3-dehydroquinate dehydratase.